The primary structure comprises 288 residues: Putative alkaline ceramidase dcd3A (288 aa).

Asparagine 23 carries an N-linked (GlcNAc...) asparagine glycan. 7 helical membrane passes run 41–61 (IISL…GTGV), 78–98 (VILS…YHAT), 105–125 (LFDE…MVTV), 146–166 (HLLP…ILVI), 172–192 (ILQV…IYLI), 206–226 (SYLY…WVVE), and 240–260 (LHAF…QFLI).

Belongs to the alkaline ceramidase family.

The protein resides in the membrane. The polypeptide is Putative alkaline ceramidase dcd3A (dcd3A) (Dictyostelium discoideum (Social amoeba)).